A 128-amino-acid polypeptide reads, in one-letter code: Small ribosomal subunit protein uS9 (128 aa).

Residues 105–128 form a disordered region; that stretch reads DPRSVERKKPGQPKARRRFQFSKR. The segment covering 114 to 128 has biased composition (basic residues); that stretch reads PGQPKARRRFQFSKR.

Belongs to the universal ribosomal protein uS9 family.

This Bacteroides thetaiotaomicron (strain ATCC 29148 / DSM 2079 / JCM 5827 / CCUG 10774 / NCTC 10582 / VPI-5482 / E50) protein is Small ribosomal subunit protein uS9.